A 152-amino-acid polypeptide reads, in one-letter code: Large ribosomal subunit protein bL9 (152 aa).

This sequence belongs to the bacterial ribosomal protein bL9 family.

Functionally, binds to the 23S rRNA. The chain is Large ribosomal subunit protein bL9 from Coxiella burnetii (strain Dugway 5J108-111).